An 83-amino-acid polypeptide reads, in one-letter code: Protein FAM240A (83 aa).

This sequence belongs to the FAM240 family.

In Homo sapiens (Human), this protein is Protein FAM240A.